Consider the following 242-residue polypeptide: Required for respiratory growth protein 7, mitochondrial (242 aa).

This sequence belongs to the RRG7 family.

The protein resides in the mitochondrion. The protein is Required for respiratory growth protein 7, mitochondrial (RRG7) of Saccharomyces cerevisiae (strain ATCC 204508 / S288c) (Baker's yeast).